The sequence spans 123 residues: Small ribosomal subunit protein uS12 (123 aa).

Asp89 carries the post-translational modification 3-methylthioaspartic acid.

This sequence belongs to the universal ribosomal protein uS12 family. In terms of assembly, part of the 30S ribosomal subunit. Contacts proteins S8 and S17. May interact with IF1 in the 30S initiation complex.

In terms of biological role, with S4 and S5 plays an important role in translational accuracy. Interacts with and stabilizes bases of the 16S rRNA that are involved in tRNA selection in the A site and with the mRNA backbone. Located at the interface of the 30S and 50S subunits, it traverses the body of the 30S subunit contacting proteins on the other side and probably holding the rRNA structure together. The combined cluster of proteins S8, S12 and S17 appears to hold together the shoulder and platform of the 30S subunit. This Pelagibacter ubique (strain HTCC1062) protein is Small ribosomal subunit protein uS12.